The chain runs to 845 residues: Protein P (845 aa).

The interval 1–179 is terminal protein domain (TP); the sequence is MPLSYQHFLK…FCGSPYSWEQ (179 aa). The interval 180 to 348 is spacer; the sequence is ELHHGRLVTK…YCLSHLVNLL (169 aa). Disordered stretches follow at residues 188–211 and 288–317; these read TKTSQRHGDKSVCSQPSGILSRSS and YSHLSTSKRQSSSGHKVEFPSFPPSSARSQ. Composition is skewed to polar residues over residues 199-211 and 290-301; these read VCSQPSGILSRSS and HLSTSKRQSSSG. The polymerase/reverse transcriptase domain (RT) stretch occupies residues 349–692; it reads EDWGPCTDHG…YMNLYPVARQ (344 aa). The Reverse transcriptase domain occupies 359–602; sequence EHHIRIPRTP…YSLNFMGYII (244 aa). Residues Asp431, Asp553, and Asp554 each coordinate Mg(2+).

It belongs to the hepadnaviridae P protein family.

It carries out the reaction DNA(n) + a 2'-deoxyribonucleoside 5'-triphosphate = DNA(n+1) + diphosphate. The catalysed reaction is Endonucleolytic cleavage to 5'-phosphomonoester.. Activated by host HSP70 and HSP40 in vitro to be able to bind the epsilon loop of the pgRNA. Because deletion of the RNase H region renders the protein partly chaperone-independent, the chaperones may be needed indirectly to relieve occlusion of the RNA-binding site by this domain. Inhibited by several reverse-transcriptase inhibitors: Lamivudine, Adefovir and Entecavir. Multifunctional enzyme that converts the viral RNA genome into dsDNA in viral cytoplasmic capsids. This enzyme displays a DNA polymerase activity that can copy either DNA or RNA templates, and a ribonuclease H (RNase H) activity that cleaves the RNA strand of RNA-DNA heteroduplexes in a partially processive 3'- to 5'-endonucleasic mode. Neo-synthesized pregenomic RNA (pgRNA) are encapsidated together with the P protein, and reverse-transcribed inside the nucleocapsid. Initiation of reverse-transcription occurs first by binding the epsilon loop on the pgRNA genome, and is initiated by protein priming, thereby the 5'-end of (-)DNA is covalently linked to P protein. Partial (+)DNA is synthesized from the (-)DNA template and generates the relaxed circular DNA (RC-DNA) genome. After budding and infection, the RC-DNA migrates in the nucleus, and is converted into a plasmid-like covalently closed circular DNA (cccDNA). The activity of P protein does not seem to be necessary for cccDNA generation, and is presumably released from (+)DNA by host nuclear DNA repair machinery. This chain is Protein P, found in Homo sapiens (Human).